The chain runs to 246 residues: Zinc import ATP-binding protein ZnuC (246 aa).

The ABC transporter domain maps to L24–Y243. G56–T63 is an ATP binding site.

The protein belongs to the ABC transporter superfamily. Zinc importer (TC 3.A.1.15.5) family. As to quaternary structure, the complex is composed of two ATP-binding proteins (ZnuC), two transmembrane proteins (ZnuB) and a solute-binding protein (ZnuA).

The protein resides in the cell membrane. The enzyme catalyses Zn(2+)(out) + ATP(in) + H2O(in) = Zn(2+)(in) + ADP(in) + phosphate(in) + H(+)(in). Functionally, part of the ABC transporter complex ZnuABC involved in zinc import. Responsible for energy coupling to the transport system. This Wolbachia pipientis wMel protein is Zinc import ATP-binding protein ZnuC.